Reading from the N-terminus, the 177-residue chain is Large ribosomal subunit protein uL6 (177 aa).

Belongs to the universal ribosomal protein uL6 family. As to quaternary structure, part of the 50S ribosomal subunit.

In terms of biological role, this protein binds to the 23S rRNA, and is important in its secondary structure. It is located near the subunit interface in the base of the L7/L12 stalk, and near the tRNA binding site of the peptidyltransferase center. This Shewanella frigidimarina (strain NCIMB 400) protein is Large ribosomal subunit protein uL6.